We begin with the raw amino-acid sequence, 118 residues long: Small ribosomal subunit protein bS6 (118 aa).

This sequence belongs to the bacterial ribosomal protein bS6 family.

Functionally, binds together with bS18 to 16S ribosomal RNA. The polypeptide is Small ribosomal subunit protein bS6 (Saccharopolyspora erythraea (strain ATCC 11635 / DSM 40517 / JCM 4748 / NBRC 13426 / NCIMB 8594 / NRRL 2338)).